The following is a 622-amino-acid chain: Fanconi anemia group G protein (622 aa).

The residue at position 7 (Ser7) is a Phosphoserine. 4 TPR repeats span residues 246–279 (VQVYTALGSCHRKMGNPQRALLYLVAALKEGSAW), 344–377 (SQTKHILASRCLQTGRAGDAAEHYLDLLALLLDS), 453–486 (SATHLLQGQAWVQLGAQKVAISEFSRCLELLFRA), and 514–547 (AAALISRGLEWVASGQDTKALQDFLLSVQMCPGN).

As to quaternary structure, belongs to the multisubunit FA complex composed of FANCA, FANCB, FANCC, FANCE, FANCF, FANCG, FANCL/PHF9 and FANCM. The complex is not found in FA patients. In complex with FANCF, FANCA and FANCL, but not with FANCC, nor FANCE, interacts with HES1; this interaction may be essential for the stability and nuclear localization of FA core complex proteins. The complex with FANCC and FANCG may also include EIF2AK2 and HSP70. When phosphorylated at Ser-7, forms a complex with BRCA2, FANCD2 and XRCC3. Highly expressed in testis and thymus. Found in lymphoblasts.

It localises to the nucleus. Its subcellular location is the cytoplasm. In terms of biological role, DNA repair protein that may operate in a postreplication repair or a cell cycle checkpoint function. May be implicated in interstrand DNA cross-link repair and in the maintenance of normal chromosome stability. Candidate tumor suppressor gene. This is Fanconi anemia group G protein (FANCG) from Homo sapiens (Human).